The primary structure comprises 204 residues: Altered inheritance of mitochondria protein 20 (204 aa).

A helical transmembrane segment spans residues 6–26 (VAVGTAVGIPIAVGVIIALIF).

The protein belongs to the SKG1 family.

It localises to the vacuole membrane. Involved in cell cycle progression and surviving DNA damage. This Saccharomyces cerevisiae (strain JAY291) (Baker's yeast) protein is Altered inheritance of mitochondria protein 20 (AIM20).